A 264-amino-acid polypeptide reads, in one-letter code: Tryptophan synthase alpha chain (264 aa).

Residues glutamate 49 and aspartate 60 each act as proton acceptor in the active site.

This sequence belongs to the TrpA family. In terms of assembly, tetramer of two alpha and two beta chains.

It carries out the reaction (1S,2R)-1-C-(indol-3-yl)glycerol 3-phosphate + L-serine = D-glyceraldehyde 3-phosphate + L-tryptophan + H2O. Its pathway is amino-acid biosynthesis; L-tryptophan biosynthesis; L-tryptophan from chorismate: step 5/5. Its function is as follows. The alpha subunit is responsible for the aldol cleavage of indoleglycerol phosphate to indole and glyceraldehyde 3-phosphate. This Laribacter hongkongensis (strain HLHK9) protein is Tryptophan synthase alpha chain.